Here is a 497-residue protein sequence, read N- to C-terminus: MTYLLALDQGTSSSRSIVFDREGRIVAIAQKELTQIYPRPGWVEHDPMEIWHSQLATARDVLAKAKLQPADIHAIGITNQRETTLLWNRKTGQPVHHAIVWQDRRAEPMCAQLRDQGMAATIQEKTGLVIDAYFSGTKLRWLLDNVPGARAQAERGELAFGTVDSWLMWQLTGGKVHVTDVSNASRTMLFNVHRNEWDADLLKALDIPAALMPSVQPSSSHFADTDAALLGRALPIGGVAGDQQSALFGQACFAAGMAKNTYGTGCFLLMHTGGECQPSHNGLLVTSAAQTSATPQYAMEGSVFVGGAVVQWLRDGLKAIKGSAEVQSLAESVPDAGGVMMVPAFTGLGAPYWDADARGTITGLTRGTTVAHIARAALESIAYQSAALLQAMSRDAVAAGGTPVAELRVDGGASVNDLLMQFQADLLGIPVVRPEVIETTALGAAYLAGLSTGVYSDARQLSKLWKVERRFMPTMGRAQAEESMARWERAVRQATAT.

Residue T11 participates in ADP binding. 3 residues coordinate ATP: T11, S12, and S13. T11 contacts sn-glycerol 3-phosphate. R15 is an ADP binding site. Positions 81, 82, 133, and 242 each coordinate sn-glycerol 3-phosphate. Glycerol-binding residues include R81, E82, Y133, D242, and Q243. The ADP site is built by T264 and G307. T264, G307, Q311, and G412 together coordinate ATP. The ADP site is built by G412 and N416.

The protein belongs to the FGGY kinase family.

The enzyme catalyses glycerol + ATP = sn-glycerol 3-phosphate + ADP + H(+). It functions in the pathway polyol metabolism; glycerol degradation via glycerol kinase pathway; sn-glycerol 3-phosphate from glycerol: step 1/1. Inhibited by fructose 1,6-bisphosphate (FBP). Its function is as follows. Key enzyme in the regulation of glycerol uptake and metabolism. Catalyzes the phosphorylation of glycerol to yield sn-glycerol 3-phosphate. This Variovorax paradoxus (strain S110) protein is Glycerol kinase.